The following is a 357-amino-acid chain: Cinnamyl alcohol dehydrogenase 7 (357 aa).

Cysteine 46 provides a ligand contact to Zn(2+). Threonine 48 serves as a coordination point for NADP(+). Residues histidine 68, glutamate 69, cysteine 99, cysteine 102, cysteine 105, cysteine 113, and cysteine 162 each contribute to the Zn(2+) site. Residues threonine 166, 187-192 (GLGGLG), 210-215 (STSERK), threonine 250, glycine 274, and 297-299 (SMV) contribute to the NADP(+) site.

Belongs to the zinc-containing alcohol dehydrogenase family. Homodimer. Zn(2+) serves as cofactor. Expressed in the differentiation and elongation zones of primary and lateral roots. Expressed in the hypocotyl, cotyledon and leaf veins, hydathodes and trichomes. In stems, expressed in the vascular cambium region. Expressed in the style, anthers, stamen filaments, vascular tissues of sepals and stigmatic regions in flowers, and abscission, style and stigmatic regions of siliques and seed testa.

The enzyme catalyses (E)-cinnamyl alcohol + NADP(+) = (E)-cinnamaldehyde + NADPH + H(+). Its pathway is aromatic compound metabolism; phenylpropanoid biosynthesis. In terms of biological role, involved in lignin biosynthesis. Catalyzes the final step specific for the production of lignin monomers. Catalyzes the NADPH-dependent reduction of coniferaldehyde, 5-hydroxyconiferaldehyde, sinapaldehyde, 4-coumaraldehyde and caffeyl aldehyde to their respective alcohols. This chain is Cinnamyl alcohol dehydrogenase 7 (CAD7), found in Arabidopsis thaliana (Mouse-ear cress).